The primary structure comprises 81 residues: Defensin-like protein 130 (81 aa).

Positions 1–21 (MTKNTSLTIFMVVLVIGMLYT) are cleaved as a signal peptide. Intrachain disulfides connect Cys32/Cys81, Cys41/Cys63, Cys46/Cys75, and Cys50/Cys77.

Belongs to the DEFL family.

The protein resides in the secreted. The sequence is that of Defensin-like protein 130 (LCR28) from Arabidopsis thaliana (Mouse-ear cress).